A 2136-amino-acid chain; its full sequence is Protein Ycf2 (2136 aa).

1404–1411 lines the ATP pocket; sequence GPIETGRS.

Belongs to the Ycf2 family.

The protein resides in the plastid. Its subcellular location is the chloroplast stroma. Probable ATPase of unknown function. Its presence in a non-photosynthetic plant (Epifagus virginiana) and experiments in tobacco indicate that it has an essential function which is probably not related to photosynthesis. The sequence is that of Protein Ycf2 from Marchantia polymorpha (Common liverwort).